A 337-amino-acid polypeptide reads, in one-letter code: 4-hydroxyproline 2-epimerase (337 aa).

Cysteine 91 serves as the catalytic Proton acceptor. Substrate is bound by residues 92-93, aspartate 252, and 257-258; these read GH and GT.

The protein belongs to the proline racemase family.

It catalyses the reaction trans-4-hydroxy-L-proline = cis-4-hydroxy-D-proline. Functionally, catalyzes the epimerization of trans-4-hydroxy-L-proline (t4LHyp) to cis-4-hydroxy-D-proline (c4DHyp). Is involved in a degradation pathway that converts t4LHyp to alpha-ketoglutarate, which allows R.sphaeroides to grow on t4LHyp as a sole carbon source. Displays no proline racemase activity. The sequence is that of 4-hydroxyproline 2-epimerase from Cereibacter sphaeroides (strain ATCC 17023 / DSM 158 / JCM 6121 / CCUG 31486 / LMG 2827 / NBRC 12203 / NCIMB 8253 / ATH 2.4.1.) (Rhodobacter sphaeroides).